Here is a 190-residue protein sequence, read N- to C-terminus: Prostaglandin-H2 D-isomerase (190 aa).

Positions 1-22 (MATHHTLWMGLALLGVLGDLQA) are cleaved as a signal peptide. Asn-51 carries N-linked (GlcNAc...) asparagine glycosylation. Residue Cys-65 is the Nucleophile of the active site. Asn-78 carries an N-linked (GlcNAc...) asparagine glycan. A disulfide bridge links Cys-89 with Cys-186.

The protein belongs to the calycin superfamily. Lipocalin family. Monomer.

The protein resides in the rough endoplasmic reticulum. The protein localises to the nucleus membrane. It is found in the golgi apparatus. It localises to the cytoplasm. Its subcellular location is the perinuclear region. The protein resides in the secreted. The enzyme catalyses prostaglandin H2 = prostaglandin D2. Its function is as follows. Catalyzes the conversion of PGH2 to PGD2, a prostaglandin involved in smooth muscle contraction/relaxation and a potent inhibitor of platelet aggregation. Involved in a variety of CNS functions, such as sedation, NREM sleep and PGE2-induced allodynia, and may have an anti-apoptotic role in oligodendrocytes. Binds small non-substrate lipophilic molecules, including biliverdin, bilirubin, retinal, retinoic acid and thyroid hormone, and may act as a scavenger for harmful hydrophobic molecules and as a secretory retinoid and thyroid hormone transporter. Possibly involved in development and maintenance of the blood-brain, blood-retina, blood-aqueous humor and blood-testis barrier. It is likely to play important roles in both maturation and maintenance of the central nervous system and male reproductive system. Involved in PLA2G3-dependent maturation of mast cells. PLA2G3 is secreted by immature mast cells and acts on nearby fibroblasts upstream to PTDGS to synthesize PGD2, which in turn promotes mast cell maturation and degranulation via PTGDR. This is Prostaglandin-H2 D-isomerase (PTGDS) from Gorilla gorilla gorilla (Western lowland gorilla).